The primary structure comprises 324 residues: MEGQPIHKPVLLREVIELLGIRPGMKILDATVGLGGHSRGMLEAAGGEGQVLGLDRDREALSEAGRWLAPYGDRVRLVRTRSSRFPAVLAEAGWEKVDAALLDAGMSSLQLDDPERGFGFLHDGPLDMRMGAEDGGETAEGLVNLASYARLCEIIREYGEDPQAGRIARAIVSVREKEAITTTARLAEVVWQAYPAKWRATARQHPATRTFQALRMAVNEELAELEAFLKAIPDHLAPGGRVAVISFHSLEDRLVKRAFRAEATDCICPREQVVCVCGHRARLRILTKKPVMAGEEEVRDNSRARSAKLRVAERLPDAGADVAG.

Residues 35–37, Asp55, Phe85, Asp103, and Gln110 each bind S-adenosyl-L-methionine; that span reads GGH.

This sequence belongs to the methyltransferase superfamily. RsmH family.

It is found in the cytoplasm. The catalysed reaction is cytidine(1402) in 16S rRNA + S-adenosyl-L-methionine = N(4)-methylcytidine(1402) in 16S rRNA + S-adenosyl-L-homocysteine + H(+). Specifically methylates the N4 position of cytidine in position 1402 (C1402) of 16S rRNA. This is Ribosomal RNA small subunit methyltransferase H from Solidesulfovibrio magneticus (strain ATCC 700980 / DSM 13731 / RS-1) (Desulfovibrio magneticus).